A 98-amino-acid polypeptide reads, in one-letter code: MSITYMNMFMAFTISLLGLLLYRSHMMSSLLCLEGMMLSLFVMMTMIILNTHLTLASMIPIILLVFAACEAALGLSLLVMVSTTYGMDYVQNLNLLQC.

The next 3 helical transmembrane spans lie at 1–21 (MSIT…GLLL), 29–49 (SLLC…MIIL), and 61–81 (IILL…LVMV).

The protein belongs to the complex I subunit 4L family. In terms of assembly, core subunit of respiratory chain NADH dehydrogenase (Complex I) which is composed of 45 different subunits.

It localises to the mitochondrion inner membrane. It catalyses the reaction a ubiquinone + NADH + 5 H(+)(in) = a ubiquinol + NAD(+) + 4 H(+)(out). Its function is as follows. Core subunit of the mitochondrial membrane respiratory chain NADH dehydrogenase (Complex I) which catalyzes electron transfer from NADH through the respiratory chain, using ubiquinone as an electron acceptor. Part of the enzyme membrane arm which is embedded in the lipid bilayer and involved in proton translocation. The chain is NADH-ubiquinone oxidoreductase chain 4L (MT-ND4L) from Platyrrhinus dorsalis (Thomas's broad-nosed bat).